Reading from the N-terminus, the 364-residue chain is Formate dehydrogenase (364 aa).

Residues Val-93 and Asn-119 each coordinate substrate. NAD(+)-binding positions include 174 to 175 (RI), Asp-195, 230 to 234 (PLHAG), Thr-256, Asp-282, and 311 to 314 (HYSG).

Belongs to the D-isomer specific 2-hydroxyacid dehydrogenase family. FDH subfamily. Homodimer.

The protein localises to the cytoplasm. The enzyme catalyses formate + NAD(+) = CO2 + NADH. With respect to regulation, cu(2+), Hg and p-chloromercuribenzoate are strong inhibitors of enzyme activity and Ca(2+), Mg(2+), Zn(2+), Mn(2+), Cd(2+) and Sn(2+) have no effect on activity indicating a cysteine residue in the protein is essential for enzyme activity or to maintain the proper structure of the enzyme. Nitrite and nitrate inhibit some enzyme activity, however cyanide, azide, thiocyanate and cyanate are strong inhibitors of the enzymatic reaction. The inhibition of cyanide is competitive with formate and reversible. Functionally, catalyzes the NAD(+)-dependent oxidation of formate to carbon dioxide. Formate oxidation is the final step in the methanol oxidation pathway in methylotrophic microorganisms. Has a role in the detoxification of exogenous formate in non-methylotrophic organisms. The polypeptide is Formate dehydrogenase (Candida boidinii (Yeast)).